The following is a 143-amino-acid chain: Large ribosomal subunit protein uL11 (143 aa).

This sequence belongs to the universal ribosomal protein uL11 family. Part of the ribosomal stalk of the 50S ribosomal subunit. Interacts with L10 and the large rRNA to form the base of the stalk. L10 forms an elongated spine to which L12 dimers bind in a sequential fashion forming a multimeric L10(L12)X complex. One or more lysine residues are methylated.

Forms part of the ribosomal stalk which helps the ribosome interact with GTP-bound translation factors. This is Large ribosomal subunit protein uL11 from Caulobacter sp. (strain K31).